Consider the following 389-residue polypeptide: S-adenosylmethionine synthase (389 aa).

Histidine 19 contributes to the ATP binding site. Aspartate 21 serves as a coordination point for Mg(2+). Residue glutamate 47 participates in K(+) binding. L-methionine contacts are provided by glutamate 60 and glutamine 103. The segment at 103–113 is flexible loop; the sequence is QSVDIAQGVSR. Residues 168-170, 234-235, aspartate 243, 249-250, alanine 266, and lysine 270 each bind ATP; these read DGK, RF, and RK. Residue aspartate 243 coordinates L-methionine. Lysine 274 is a binding site for L-methionine.

Belongs to the AdoMet synthase family. As to quaternary structure, homotetramer; dimer of dimers. It depends on Mg(2+) as a cofactor. K(+) is required as a cofactor.

It is found in the cytoplasm. The enzyme catalyses L-methionine + ATP + H2O = S-adenosyl-L-methionine + phosphate + diphosphate. It participates in amino-acid biosynthesis; S-adenosyl-L-methionine biosynthesis; S-adenosyl-L-methionine from L-methionine: step 1/1. Catalyzes the formation of S-adenosylmethionine (AdoMet) from methionine and ATP. The overall synthetic reaction is composed of two sequential steps, AdoMet formation and the subsequent tripolyphosphate hydrolysis which occurs prior to release of AdoMet from the enzyme. The polypeptide is S-adenosylmethionine synthase (Solidesulfovibrio magneticus (strain ATCC 700980 / DSM 13731 / RS-1) (Desulfovibrio magneticus)).